Here is a 274-residue protein sequence, read N- to C-terminus: Putative phosphoenolpyruvate synthase regulatory protein (274 aa).

Position 154–161 (154–161) interacts with ADP; the sequence is AVSRSGKT.

Belongs to the pyruvate, phosphate/water dikinase regulatory protein family. PSRP subfamily.

It carries out the reaction [pyruvate, water dikinase] + ADP = [pyruvate, water dikinase]-phosphate + AMP + H(+). The catalysed reaction is [pyruvate, water dikinase]-phosphate + phosphate + H(+) = [pyruvate, water dikinase] + diphosphate. In terms of biological role, bifunctional serine/threonine kinase and phosphorylase involved in the regulation of the phosphoenolpyruvate synthase (PEPS) by catalyzing its phosphorylation/dephosphorylation. The chain is Putative phosphoenolpyruvate synthase regulatory protein from Alkalilimnicola ehrlichii (strain ATCC BAA-1101 / DSM 17681 / MLHE-1).